A 314-amino-acid polypeptide reads, in one-letter code: tRNA-cytidine(32) 2-sulfurtransferase (314 aa).

The short motif at 58–63 is the PP-loop motif element; that stretch reads SGGKDS. The [4Fe-4S] cluster site is built by cysteine 133, cysteine 136, and cysteine 224.

The protein belongs to the TtcA family. In terms of assembly, homodimer. Mg(2+) is required as a cofactor. The cofactor is [4Fe-4S] cluster.

It is found in the cytoplasm. It catalyses the reaction cytidine(32) in tRNA + S-sulfanyl-L-cysteinyl-[cysteine desulfurase] + AH2 + ATP = 2-thiocytidine(32) in tRNA + L-cysteinyl-[cysteine desulfurase] + A + AMP + diphosphate + H(+). It functions in the pathway tRNA modification. Functionally, catalyzes the ATP-dependent 2-thiolation of cytidine in position 32 of tRNA, to form 2-thiocytidine (s(2)C32). The sulfur atoms are provided by the cysteine/cysteine desulfurase (IscS) system. The polypeptide is tRNA-cytidine(32) 2-sulfurtransferase (Polaromonas naphthalenivorans (strain CJ2)).